Reading from the N-terminus, the 545-residue chain is High-molecular-weight cytochrome c (545 aa).

The first 31 residues, 1–31 (MRNGRTLLRWAGVLAATAIIGVGGFWSQGTT), serve as a signal peptide directing secretion. Residues His66, His69, Cys80, Cys83, His84, His111, Cys114, Cys117, His118, Cys135, Cys138, His139, His159, His162, Cys178, Cys181, His182, His183, Cys202, Cys205, His206, His222, Cys225, Cys228, His229, Cys244, Cys247, His248, His298, His301, Cys308, Cys311, His312, His313, Cys319, Cys322, His323, His341, Cys349, Cys352, His353, Cys362, Cys365, His366, Cys378, Cys381, His382, His449, His470, Cys477, Cys480, His481, His482, Cys493, Cys496, His497, His516, Cys519, Cys522, His523, Cys536, Cys539, and His540 each coordinate heme c.

In terms of assembly, monomer. Binds 16 heme c groups per subunit. High-spin heme 15 has single axial histidine ligand and the other hemes are low-spin bis-histidinyl coordinated.

Its subcellular location is the periplasm. Its function is as follows. HMWC (high-molecular-weight cytochrome c), ORF2, ORF3, ORF4, ORF5 and ORF6 in the HMC operon form a transmembrane protein complex that allows electron flow from the periplasmic hydrogenase to the cytoplasmic enzymes that catalyze reduction of sulfates. The chain is High-molecular-weight cytochrome c (hmcA) from Nitratidesulfovibrio vulgaris (strain ATCC 29579 / DSM 644 / CCUG 34227 / NCIMB 8303 / VKM B-1760 / Hildenborough) (Desulfovibrio vulgaris).